We begin with the raw amino-acid sequence, 338 residues long: Glycerol-3-phosphate dehydrogenase [NAD(P)+] (338 aa).

W11, R30, and K109 together coordinate NADPH. Residues K109, G143, and S145 each coordinate sn-glycerol 3-phosphate. A147 is an NADPH binding site. Sn-glycerol 3-phosphate contacts are provided by K198, D251, S261, R262, and N263. K198 (proton acceptor) is an active-site residue. R262 is an NADPH binding site. 2 residues coordinate NADPH: V286 and E288.

This sequence belongs to the NAD-dependent glycerol-3-phosphate dehydrogenase family.

The protein localises to the cytoplasm. It carries out the reaction sn-glycerol 3-phosphate + NAD(+) = dihydroxyacetone phosphate + NADH + H(+). The catalysed reaction is sn-glycerol 3-phosphate + NADP(+) = dihydroxyacetone phosphate + NADPH + H(+). The protein operates within membrane lipid metabolism; glycerophospholipid metabolism. Its function is as follows. Catalyzes the reduction of the glycolytic intermediate dihydroxyacetone phosphate (DHAP) to sn-glycerol 3-phosphate (G3P), the key precursor for phospholipid synthesis. The polypeptide is Glycerol-3-phosphate dehydrogenase [NAD(P)+] (Cupriavidus taiwanensis (strain DSM 17343 / BCRC 17206 / CCUG 44338 / CIP 107171 / LMG 19424 / R1) (Ralstonia taiwanensis (strain LMG 19424))).